The primary structure comprises 1045 residues: Protein phosphatase Slingshot (1045 aa).

Residues M1–D20 show a composition bias toward polar residues. Disordered regions lie at residues M1–R35, T58–S80, K143–N194, and E306–E325. The span at T66–S80 shows a compositional bias: low complexity. Residues G149–S174 are compositionally biased toward polar residues. Residues S175–N185 show a composition bias toward basic and acidic residues. Residues E324–G379 enclose the DEK-C domain. The 142-residue stretch at A383–A524 folds into the Tyrosine-protein phosphatase domain. Catalysis depends on C468, which acts as the Phosphocysteine intermediate. Positions E529–R547 are enriched in basic and acidic residues. Disordered stretches follow at residues E529–S631, S699–R799, and A1001–S1045. Polar residues predominate over residues A560–T569. Basic residues predominate over residues M586 to R601. Polar residues predominate over residues R602 to N625. Low complexity predominate over residues S704 to I713. S719 is modified (phosphoserine). A compositionally biased stretch (low complexity) spans C721–V732. Composition is skewed to polar residues over residues T764–A774 and K1008–V1021. Low complexity predominate over residues S1029 to S1045.

Belongs to the protein-tyrosine phosphatase family. Interacts with actin.

The protein localises to the cytoplasm. Its subcellular location is the cytoskeleton. The catalysed reaction is O-phospho-L-tyrosyl-[protein] + H2O = L-tyrosyl-[protein] + phosphate. It catalyses the reaction O-phospho-L-seryl-[protein] + H2O = L-seryl-[protein] + phosphate. The enzyme catalyses O-phospho-L-threonyl-[protein] + H2O = L-threonyl-[protein] + phosphate. In terms of biological role, protein phosphatase which regulates actin filament dynamics. Dephosphorylates and activates the actin binding/depolymerizing factor tsr/cofilin, which subsequently binds to actin filaments and stimulates their disassembly. Required for axon growth. The chain is Protein phosphatase Slingshot (ssh) from Drosophila melanogaster (Fruit fly).